The primary structure comprises 197 residues: Nucleoside triphosphate pyrophosphatase (197 aa).

Asp70 functions as the Proton acceptor in the catalytic mechanism.

This sequence belongs to the Maf family. It depends on a divalent metal cation as a cofactor.

Its subcellular location is the cytoplasm. The catalysed reaction is a ribonucleoside 5'-triphosphate + H2O = a ribonucleoside 5'-phosphate + diphosphate + H(+). It catalyses the reaction a 2'-deoxyribonucleoside 5'-triphosphate + H2O = a 2'-deoxyribonucleoside 5'-phosphate + diphosphate + H(+). Its function is as follows. Nucleoside triphosphate pyrophosphatase. May have a dual role in cell division arrest and in preventing the incorporation of modified nucleotides into cellular nucleic acids. This is Nucleoside triphosphate pyrophosphatase (yhdE) from Shigella flexneri.